Reading from the N-terminus, the 305-residue chain is Acetyl-coenzyme A carboxylase carboxyl transferase subunit beta (305 aa).

In terms of domain architecture, CoA carboxyltransferase N-terminal spans 25-293; it reads LWVQCPACQQ…LPKVESVASL (269 aa). The Zn(2+) site is built by cysteine 29, cysteine 32, cysteine 48, and cysteine 51. The segment at 29–51 adopts a C4-type zinc-finger fold; the sequence is CPACQQMIFARDLEKNQRVCTHC.

Belongs to the AccD/PCCB family. Acetyl-CoA carboxylase is a heterohexamer composed of biotin carboxyl carrier protein (AccB), biotin carboxylase (AccC) and two subunits each of ACCase subunit alpha (AccA) and ACCase subunit beta (AccD). It depends on Zn(2+) as a cofactor.

The protein resides in the cytoplasm. The enzyme catalyses N(6)-carboxybiotinyl-L-lysyl-[protein] + acetyl-CoA = N(6)-biotinyl-L-lysyl-[protein] + malonyl-CoA. Its pathway is lipid metabolism; malonyl-CoA biosynthesis; malonyl-CoA from acetyl-CoA: step 1/1. Functionally, component of the acetyl coenzyme A carboxylase (ACC) complex. Biotin carboxylase (BC) catalyzes the carboxylation of biotin on its carrier protein (BCCP) and then the CO(2) group is transferred by the transcarboxylase to acetyl-CoA to form malonyl-CoA. This chain is Acetyl-coenzyme A carboxylase carboxyl transferase subunit beta, found in Granulibacter bethesdensis (strain ATCC BAA-1260 / CGDNIH1).